The sequence spans 297 residues: 3-mercaptopyruvate sulfurtransferase (297 aa).

A2 carries the N-acetylalanine modification. A Rhodanese 1 domain is found at 25 to 144; it reads ASQPLKLLDA…WLSQNLPISS (120 aa). The residue at position 35 (S35) is a Phosphoserine. The residue at position 40 (K40) is an N6-acetyllysine; alternate. K40 carries the post-translational modification N6-succinyllysine; alternate. The interval 145-160 is hinge; the sequence is GKSPSEPAEFCAQLDP. 2 positions are modified to N6-succinyllysine: K146 and K164. Residues 174–288 enclose the Rhodanese 2 domain; it reads DARRFQVVDA…WYMRAQPEHV (115 aa). Residue R188 participates in substrate binding. C248 acts as the Cysteine persulfide intermediate in catalysis.

As to quaternary structure, monomer (active form). Homodimer; disulfide-linked (inactive form). In terms of processing, the N-terminus is blocked. Expressed in liver, heart, kidney and brain. Localizes to tubular epithelium in the kidney, pericentral hepatocytes in the liver, cardiac cells in the heart and neuroglial cells in the brain. Also expressed in vascular endothelium of the thoracic aorta. Weak expression in lung and thymus.

It is found in the cytoplasm. The protein localises to the mitochondrion. Its subcellular location is the synapse. It localises to the synaptosome. The catalysed reaction is 2-oxo-3-sulfanylpropanoate + [thioredoxin]-dithiol = [thioredoxin]-disulfide + hydrogen sulfide + pyruvate + H(+). By oxidative stress, and thioredoxin. Under oxidative stress conditions, the catalytic cysteine site is converted to a sulfenate which inhibits the MPST enzyme activity. Reduced thioredoxin cleaves an intersubunit disulfide bond to turn on the redox switch and reactivate the enzyme. Inhibited by different oxidants, hydrogen peroxide and tetrathionate. Functionally, transfer of a sulfur ion to cyanide or to other thiol compounds. Also has weak rhodanese activity. Detoxifies cyanide and is required for thiosulfate biosynthesis. Acts as an antioxidant. In combination with cysteine aminotransferase (CAT), contributes to the catabolism of cysteine and is an important producer of hydrogen sulfide in the brain, retina and vascular endothelial cells. Hydrogen sulfide H(2)S is an important synaptic modulator, signaling molecule, smooth muscle contractor and neuroprotectant. Its production by the 3MST/CAT pathway is regulated by calcium ions. The polypeptide is 3-mercaptopyruvate sulfurtransferase (Mpst) (Rattus norvegicus (Rat)).